We begin with the raw amino-acid sequence, 271 residues long: Mannosyl-3-phosphoglycerate phosphatase (271 aa).

The active-site Nucleophile is the D13. Residues D13, D15, and D214 each coordinate Mg(2+).

The protein belongs to the HAD-like hydrolase superfamily. MPGP family. It depends on Mg(2+) as a cofactor.

It is found in the cytoplasm. The catalysed reaction is 2-O-(alpha-D-mannosyl)-3-phosphoglycerate + H2O = (2R)-2-O-(alpha-D-mannosyl)-glycerate + phosphate. The protein is Mannosyl-3-phosphoglycerate phosphatase (yedP) of Salmonella choleraesuis (strain SC-B67).